An 88-amino-acid polypeptide reads, in one-letter code: Small ribosomal subunit protein bS20 (88 aa).

A disordered region spans residues 1-27; sequence MANIKSQIKRNKTNEKARLRNKAVKSS.

This sequence belongs to the bacterial ribosomal protein bS20 family.

Binds directly to 16S ribosomal RNA. The sequence is that of Small ribosomal subunit protein bS20 from Streptomyces griseus subsp. griseus (strain JCM 4626 / CBS 651.72 / NBRC 13350 / KCC S-0626 / ISP 5235).